A 504-amino-acid polypeptide reads, in one-letter code: Maturase K (504 aa).

The protein belongs to the intron maturase 2 family. MatK subfamily.

Its subcellular location is the plastid. It is found in the chloroplast. Usually encoded in the trnK tRNA gene intron. Probably assists in splicing its own and other chloroplast group II introns. The sequence is that of Maturase K from Pseudoturritis turrita (Tower rock-cress).